Reading from the N-terminus, the 328-residue chain is 4-hydroxythreonine-4-phosphate dehydrogenase (328 aa).

Histidine 134 and threonine 135 together coordinate substrate. Residues histidine 164, histidine 209, and histidine 264 each coordinate a divalent metal cation. Residues lysine 272, asparagine 281, and arginine 290 each coordinate substrate.

Belongs to the PdxA family. As to quaternary structure, homodimer. Zn(2+) is required as a cofactor. It depends on Mg(2+) as a cofactor. The cofactor is Co(2+).

The protein resides in the cytoplasm. The enzyme catalyses 4-(phosphooxy)-L-threonine + NAD(+) = 3-amino-2-oxopropyl phosphate + CO2 + NADH. It functions in the pathway cofactor biosynthesis; pyridoxine 5'-phosphate biosynthesis; pyridoxine 5'-phosphate from D-erythrose 4-phosphate: step 4/5. Its function is as follows. Catalyzes the NAD(P)-dependent oxidation of 4-(phosphooxy)-L-threonine (HTP) into 2-amino-3-oxo-4-(phosphooxy)butyric acid which spontaneously decarboxylates to form 3-amino-2-oxopropyl phosphate (AHAP). The protein is 4-hydroxythreonine-4-phosphate dehydrogenase of Shewanella denitrificans (strain OS217 / ATCC BAA-1090 / DSM 15013).